The following is a 544-amino-acid chain: Chaperonin GroEL 3 (544 aa).

Residues 30–33, Lys-51, 87–91, Gly-415, and Asp-496 contribute to the ATP site; these read TLGP and DGTTT.

Belongs to the chaperonin (HSP60) family. Forms a cylinder of 14 subunits composed of two heptameric rings stacked back-to-back. Interacts with the co-chaperonin GroES.

The protein resides in the cytoplasm. It carries out the reaction ATP + H2O + a folded polypeptide = ADP + phosphate + an unfolded polypeptide.. In terms of biological role, together with its co-chaperonin GroES, plays an essential role in assisting protein folding. The GroEL-GroES system forms a nano-cage that allows encapsulation of the non-native substrate proteins and provides a physical environment optimized to promote and accelerate protein folding. This Rhizobium meliloti (strain 1021) (Ensifer meliloti) protein is Chaperonin GroEL 3.